A 447-amino-acid polypeptide reads, in one-letter code: Glucose-6-phosphate isomerase (447 aa).

Catalysis depends on E289, which acts as the Proton donor. Residues H310 and K424 contribute to the active site.

Belongs to the GPI family.

The protein resides in the cytoplasm. The enzyme catalyses alpha-D-glucose 6-phosphate = beta-D-fructose 6-phosphate. It functions in the pathway carbohydrate biosynthesis; gluconeogenesis. Its pathway is carbohydrate degradation; glycolysis; D-glyceraldehyde 3-phosphate and glycerone phosphate from D-glucose: step 2/4. In terms of biological role, catalyzes the reversible isomerization of glucose-6-phosphate to fructose-6-phosphate. This Parabacteroides distasonis (strain ATCC 8503 / DSM 20701 / CIP 104284 / JCM 5825 / NCTC 11152) protein is Glucose-6-phosphate isomerase.